We begin with the raw amino-acid sequence, 375 residues long: Amylovoran biosynthesis protein AmsC (375 aa).

Helical transmembrane passes span 2–22, 31–51, 93–113, 162–182, 208–228, 256–276, 287–307, 309–329, and 337–357; these read AIYWIVSYSILVFCFFELAMI, KILINYFFLIGVFALILFAGI, MVLAWVASCFTHESYFFLLFI, IAFICSLVARNYLLALLFIVL, LPLVLVIASIPLGIIGGKKLF, VFGLANLKNIAFIGAFTLYYF, VYILLIAYSIGAAVRITFSDF, IFGGRVGNLFLHTEPLLFAFL, and LLNFFMLFSITTYYLAYNTIL.

The protein resides in the cell membrane. Its pathway is glycan metabolism; exopolysaccharide biosynthesis. Functionally, involved in the biosynthesis of amylovoran which functions as a virulence factor. The sequence is that of Amylovoran biosynthesis protein AmsC (amsC) from Erwinia amylovora (Fire blight bacteria).